The sequence spans 200 residues: MASKSKGLVVLALLLAAAILVASADEHPQAKKEENEAGVENFFHGGGGHHGHGRGGHGGGGYGGGGGYGGGGGGYPGGGGGYGGGGGGYPGHGGEGGGGYGGGGGYPGHGGEGGGGYGGGGGYHGHGGEGGGGYGGGGGYHGHGGEGGGGYGGGGGGYPGHGGGGGHGGGRCKWGCCGHGFLHHGCRCCARADEVPEVRN.

An N-terminal signal peptide occupies residues 1–24 (MASKSKGLVVLALLLAAAILVASA).

Belongs to the GRP family.

Its subcellular location is the secreted. The protein resides in the cell wall. Responsible for plasticity of the cell wall. In Hordeum vulgare (Barley), this protein is Glycine-rich cell wall structural protein (GRP).